A 209-amino-acid polypeptide reads, in one-letter code: Large ribosomal subunit protein uL3 (209 aa).

The interval 127 to 151 (SGGPSSHGSKFHRHLGGTGQATTPA) is disordered.

This sequence belongs to the universal ribosomal protein uL3 family. As to quaternary structure, part of the 50S ribosomal subunit. Forms a cluster with proteins L14 and L19.

Functionally, one of the primary rRNA binding proteins, it binds directly near the 3'-end of the 23S rRNA, where it nucleates assembly of the 50S subunit. The sequence is that of Large ribosomal subunit protein uL3 from Borrelia duttonii (strain Ly).